A 363-amino-acid polypeptide reads, in one-letter code: Peptide chain release factor 1 (363 aa).

Glutamine 237 carries the N5-methylglutamine modification. The span at 284 to 296 shows a compositional bias: basic and acidic residues; it reads EDEKRRSAEESTR. The segment at 284-306 is disordered; that stretch reads EDEKRRSAEESTRRSLVASGDRS.

This sequence belongs to the prokaryotic/mitochondrial release factor family. Methylated by PrmC. Methylation increases the termination efficiency of RF1.

It localises to the cytoplasm. Peptide chain release factor 1 directs the termination of translation in response to the peptide chain termination codons UAG and UAA. This is Peptide chain release factor 1 from Shewanella oneidensis (strain ATCC 700550 / JCM 31522 / CIP 106686 / LMG 19005 / NCIMB 14063 / MR-1).